The following is a 754-amino-acid chain: Polyribonucleotide nucleotidyltransferase (754 aa).

Mg(2+)-binding residues include Asp525 and Asp531. Positions 591–650 (PRITTIKVPVDKIGEVIGPKGKMINSITEETGASISIEDDGTVFVGASNGEAAQAAIDKI) constitute a KH domain. Positions 662 to 731 (GERFLGTVVK…NRGKISLVLV (70 aa)) constitute an S1 motif domain.

This sequence belongs to the polyribonucleotide nucleotidyltransferase family. Mg(2+) serves as cofactor.

The protein localises to the cytoplasm. It carries out the reaction RNA(n+1) + phosphate = RNA(n) + a ribonucleoside 5'-diphosphate. Functionally, involved in mRNA degradation. Catalyzes the phosphorolysis of single-stranded polyribonucleotides processively in the 3'- to 5'-direction. The polypeptide is Polyribonucleotide nucleotidyltransferase (Mycolicibacterium vanbaalenii (strain DSM 7251 / JCM 13017 / BCRC 16820 / KCTC 9966 / NRRL B-24157 / PYR-1) (Mycobacterium vanbaalenii)).